The following is a 535-amino-acid chain: Keratin, type II cytoskeletal 79 (535 aa).

Polar residues-rich tracts occupy residues Met1–Thr12 and Gln28–Val38. The interval Met1–Ser53 is disordered. The head stretch occupies residues Met1–Glu141. Gly residues predominate over residues Gly43–Ser53. The segment at Glu142–Leu177 is coil 1A. An IF rod domain is found at Glu142 to Met457. The linker 1 stretch occupies residues Gln178–Phe198. Positions Ile199 to Val290 are coil 1B. The tract at residues Gln291–Ile314 is linker 12. The tract at residues Ile315 to Glu453 is coil 2. Residues Glu454–Tyr535 form a tail region.

It belongs to the intermediate filament family. As to quaternary structure, heterotetramer of two type I and two type II keratins.

This Bos taurus (Bovine) protein is Keratin, type II cytoskeletal 79 (KRT79).